The chain runs to 511 residues: Inner membrane ABC transporter permease protein YnjC (511 aa).

Over 1–8 (MATPLRYA) the chain is Cytoplasmic. The chain crosses the membrane as a helical span at residues 9–29 (LIFLLWAMVAVIYAPLIPAAL). The Periplasmic segment spans residues 30–62 (TLISPALSLTHWQALFADPQLPQALLATLVSTT). The region spanning 54–255 (LLATLVSTTI…MLLLAAYVLL (202 aa)) is the ABC transmembrane type-1 1 domain. The helical transmembrane segment at 63 to 83 (IAAVGALLIALLVIVALWPGP) threads the bilayer. Over 84 to 91 (KWQRMCAR) the chain is Cytoplasmic. Residues 92-112 (LPWLLAIPHVAFATSALLLFA) traverse the membrane as a helical segment. Over 113–130 (DGGLLYDYFPYFTPPMDR) the chain is Periplasmic. The chain crosses the membrane as a helical span at residues 131-151 (FGIGLGLTLAVKESAFLLWIL). The Cytoplasmic portion of the chain corresponds to 152 to 189 (AAVLSEKWLLQQVIVLDSLGYSRWQCLNWLLLPSVAPA). The helical transmembrane segment at 190–210 (LAMAMLAIVAWSLSVVDVAII) threads the bilayer. Residues 211–239 (LGPGNPPTLAVISWQWLTQGDIDQQTKGA) are Periplasmic-facing. A helical transmembrane segment spans residues 240-260 (LASLLLMLLLAAYVLLSYLLW). Topologically, residues 261–284 (RSWRRTIPRVDGVRKPATPLLPGN) are cytoplasmic. The helical transmembrane segment at 285–305 (TLAIFLPLTGVLCVVLLAILA) threads the bilayer. Residues 306–318 (DQSTINSEALINS) lie on the Periplasmic side of the membrane. Residues 315–496 (LINSLTMGLV…LLPLIIFALT (182 aa)) form the ABC transmembrane type-1 2 domain. The chain crosses the membrane as a helical span at residues 319 to 339 (LTMGLVATFIALLLLLLWLEW). The Cytoplasmic portion of the chain corresponds to 340 to 345 (GPQRRQ). The helical transmembrane segment at 346-366 (LWLWLPILLPALPLVAGQYTL) threads the bilayer. The Periplasmic segment spans residues 367 to 374 (ALWLKLDG). A helical transmembrane segment spans residues 375–395 (SWTAVVWGHLLWVMPWMLFIL). Over 396–432 (QPAWQRIDSRLILIAQTLGWSRAKIFFYVKCPLMLRP) the chain is Cytoplasmic. A helical membrane pass occupies residues 433-453 (VLIAFAVGFAVGIAQYMPTLW). The Periplasmic segment spans residues 454–485 (LGAGRFPTLTTEAVALSSGGSNGILAAQALWQ). The chain crosses the membrane as a helical span at residues 486–506 (LLLPLIIFALTALVAKWVGYV). Residues 507-511 (RQGLR) lie on the Cytoplasmic side of the membrane.

It belongs to the binding-protein-dependent transport system permease family.

It localises to the cell inner membrane. Probably part of the binding-protein-dependent transport system YnjCD. Probably responsible for the translocation of the substrate across the membrane. The protein is Inner membrane ABC transporter permease protein YnjC (ynjC) of Escherichia coli (strain K12).